A 1379-amino-acid chain; its full sequence is ABC multidrug transporter MDR2 (1379 aa).

The chain crosses the membrane as a helical span at residues 65 to 85 (IALIVIGTIAGIGAGIPFPLL). The 299-residue stretch at 69-367 (VIGTIAGIGA…MAPFMHIFAS (299 aa)) folds into the ABC transmembrane type-1 1 domain. The N-linked (GlcNAc...) asparagine glycan is linked to asparagine 97. The next 5 membrane-spanning stretches (helical) occupy residues 119 to 139 (VLQVIYVSILNFVCMYIHTGC), 193 to 213 (KVGLFIGTISYFVAAYIVAFL), 215 to 235 (VATIAAMLMSVVPIYFLMAFG), 301 to 321 (IQFGMLYFVAYASNALAFWQG), and 336 to 356 (VSVGAVYTVIFVLLDASFVLS). An ABC transporter 1 domain is found at 403–682 (IELQDVTFNY…DGVYAGMVRL (280 aa)). Residue 438 to 445 (GTSGSGKS) coordinates ATP. N-linked (GlcNAc...) asparagine glycosylation is found at asparagine 552 and asparagine 633. The tract at residues 738 to 758 (YMPEEADSLPTEPENEKEKPK) is disordered. A run of 4 helical transmembrane segments spans residues 781 to 801 (LGLITSIMIGVSYTGEAVIFG), 820 to 840 (GMLFGLLFFILAIVKFAAVIV), 901 to 921 (IGVLFSTVANLFAGVILSHVI), and 922 to 942 (AWRIAVVLLATLPVLLASGVL). Positions 781 to 1068 (LGLITSIMIG…MFALVPDISK (288 aa)) constitute an ABC transmembrane type-1 2 domain. An N-linked (GlcNAc...) asparagine glycan is attached at asparagine 989. 2 consecutive transmembrane segments (helical) span residues 1008–1028 (FWLSLAYSISTLVYALAYWWG) and 1032–1052 (ILAGMYTQVQFFIVLPALLFS). The 240-residue stretch at 1135 to 1374 (VQFRNVHFRY…CESYRANVIH (240 aa)) folds into the ABC transporter 2 domain. 1170-1177 (GPSGSGKS) serves as a coordination point for ATP.

The protein belongs to the ABC transporter superfamily. ABCB family. Multidrug resistance exporter (TC 3.A.1.201) subfamily.

It localises to the cell membrane. In terms of biological role, pleiotropic ABC efflux transporter that may be involved in the modulation susceptibility to a wide range of unrelated cytotoxic compounds. The polypeptide is ABC multidrug transporter MDR2 (Trichophyton equinum (strain ATCC MYA-4606 / CBS 127.97) (Horse ringworm fungus)).